We begin with the raw amino-acid sequence, 140 residues long: Organic hydroperoxide resistance protein-like 1 (140 aa).

The protein belongs to the OsmC/Ohr family.

This Staphylococcus epidermidis (strain ATCC 35984 / DSM 28319 / BCRC 17069 / CCUG 31568 / BM 3577 / RP62A) protein is Organic hydroperoxide resistance protein-like 1.